The primary structure comprises 231 residues: NADH-quinone oxidoreductase subunit C (231 aa).

It belongs to the complex I 30 kDa subunit family. As to quaternary structure, NDH-1 is composed of 14 different subunits. Subunits NuoB, C, D, E, F, and G constitute the peripheral sector of the complex.

It localises to the cell membrane. It catalyses the reaction a quinone + NADH + 5 H(+)(in) = a quinol + NAD(+) + 4 H(+)(out). In terms of biological role, NDH-1 shuttles electrons from NADH, via FMN and iron-sulfur (Fe-S) centers, to quinones in the respiratory chain. The immediate electron acceptor for the enzyme in this species is believed to be a menaquinone. Couples the redox reaction to proton translocation (for every two electrons transferred, four hydrogen ions are translocated across the cytoplasmic membrane), and thus conserves the redox energy in a proton gradient. The protein is NADH-quinone oxidoreductase subunit C of Mycobacterium sp. (strain JLS).